The following is a 258-amino-acid chain: 5'-nucleotidase SurE (258 aa).

A divalent metal cation-binding residues include D16, D17, S47, and N99.

Belongs to the SurE nucleotidase family. It depends on a divalent metal cation as a cofactor.

It is found in the cytoplasm. It carries out the reaction a ribonucleoside 5'-phosphate + H2O = a ribonucleoside + phosphate. Functionally, nucleotidase that shows phosphatase activity on nucleoside 5'-monophosphates. The sequence is that of 5'-nucleotidase SurE from Coxiella burnetii (strain CbuK_Q154) (Coxiella burnetii (strain Q154)).